Consider the following 231-residue polypeptide: Cytochrome c oxidase subunit 2 (231 aa).

Residues 1–14 are Mitochondrial intermembrane-facing; that stretch reads MATPAQLGLQNATS. The helical transmembrane segment at 15–45 threads the bilayer; the sequence is PIMEELIAFHDHALMIIFLISSLVLYIISLM. Residues 46-59 are Mitochondrial matrix-facing; it reads LTTKLTHTSTMNAQ. Residues 60–87 form a helical membrane-spanning segment; sequence EIEMIWTILPAIILIMIALPSLRILYMT. Residues 88–231 are Mitochondrial intermembrane-facing; it reads DEFNKPYLTL…WASYLYIVSL (144 aa). His-161, Cys-196, Glu-198, Cys-200, His-204, and Met-207 together coordinate Cu cation. Glu-198 serves as a coordination point for Mg(2+).

The protein belongs to the cytochrome c oxidase subunit 2 family. Component of the cytochrome c oxidase (complex IV, CIV), a multisubunit enzyme composed of 14 subunits. The complex is composed of a catalytic core of 3 subunits MT-CO1, MT-CO2 and MT-CO3, encoded in the mitochondrial DNA, and 11 supernumerary subunits COX4I, COX5A, COX5B, COX6A, COX6B, COX6C, COX7A, COX7B, COX7C, COX8 and NDUFA4, which are encoded in the nuclear genome. The complex exists as a monomer or a dimer and forms supercomplexes (SCs) in the inner mitochondrial membrane with NADH-ubiquinone oxidoreductase (complex I, CI) and ubiquinol-cytochrome c oxidoreductase (cytochrome b-c1 complex, complex III, CIII), resulting in different assemblies (supercomplex SCI(1)III(2)IV(1) and megacomplex MCI(2)III(2)IV(2)). Found in a complex with TMEM177, COA6, COX18, COX20, SCO1 and SCO2. Interacts with TMEM177 in a COX20-dependent manner. Interacts with COX20. Interacts with COX16. Cu cation serves as cofactor.

It is found in the mitochondrion inner membrane. It catalyses the reaction 4 Fe(II)-[cytochrome c] + O2 + 8 H(+)(in) = 4 Fe(III)-[cytochrome c] + 2 H2O + 4 H(+)(out). In terms of biological role, component of the cytochrome c oxidase, the last enzyme in the mitochondrial electron transport chain which drives oxidative phosphorylation. The respiratory chain contains 3 multisubunit complexes succinate dehydrogenase (complex II, CII), ubiquinol-cytochrome c oxidoreductase (cytochrome b-c1 complex, complex III, CIII) and cytochrome c oxidase (complex IV, CIV), that cooperate to transfer electrons derived from NADH and succinate to molecular oxygen, creating an electrochemical gradient over the inner membrane that drives transmembrane transport and the ATP synthase. Cytochrome c oxidase is the component of the respiratory chain that catalyzes the reduction of oxygen to water. Electrons originating from reduced cytochrome c in the intermembrane space (IMS) are transferred via the dinuclear copper A center (CU(A)) of subunit 2 and heme A of subunit 1 to the active site in subunit 1, a binuclear center (BNC) formed by heme A3 and copper B (CU(B)). The BNC reduces molecular oxygen to 2 water molecules using 4 electrons from cytochrome c in the IMS and 4 protons from the mitochondrial matrix. The protein is Cytochrome c oxidase subunit 2 (MT-CO2) of Aotus nigriceps (Black-headed night monkey).